Reading from the N-terminus, the 116-residue chain is MSMDNLVRLVEKDQYKQLPDFRPGDTVKVHVKIVEGGKERIQIFEGIVIKIRGSGLGKTFTVRKIASGGIGVERTFPYHSPVVQKIEIVKKAVTRRAKLYYIRDIRGKIRLKERKE.

Belongs to the bacterial ribosomal protein bL19 family.

Functionally, this protein is located at the 30S-50S ribosomal subunit interface and may play a role in the structure and function of the aminoacyl-tRNA binding site. The sequence is that of Large ribosomal subunit protein bL19 from Pseudothermotoga lettingae (strain ATCC BAA-301 / DSM 14385 / NBRC 107922 / TMO) (Thermotoga lettingae).